The chain runs to 274 residues: Receptor-like protein 44 (274 aa).

An N-terminal signal peptide occupies residues 1–24 (MTRSHRLLLLLLLIFQTAQRLTTA). Residues 25–223 (DPNDEACLKN…PLQEMMMKSK (199 aa)) lie on the Extracellular side of the membrane. 3 N-linked (GlcNAc...) asparagine glycosylation sites follow: N48, N82, and N95. LRR repeat units lie at residues 96 to 121 (CTNL…QYLV), 123 to 144 (LAVL…LALC), 145 to 168 (AYLN…LGLL), and 169 to 192 (ARLS…LSNR). N-linked (GlcNAc...) asparagine glycosylation is present at N127. 2 N-linked (GlcNAc...) asparagine glycosylation sites follow: N191 and N200. The chain crosses the membrane as a helical span at residues 224-244 (GLSVMAIVGIGLGSGIASLMI). Residues 245-274 (SFTGVCLWLRITEKKIVEEEGKISQSMPDY) are Cytoplasmic-facing.

Belongs to the RLP family.

It is found in the cell membrane. This Arabidopsis thaliana (Mouse-ear cress) protein is Receptor-like protein 44.